We begin with the raw amino-acid sequence, 689 residues long: Elongation factor G (689 aa).

A tr-type G domain is found at glutamate 8 to threonine 282. GTP is bound by residues alanine 17–threonine 24, aspartate 81–histidine 85, and asparagine 135–aspartate 138.

It belongs to the TRAFAC class translation factor GTPase superfamily. Classic translation factor GTPase family. EF-G/EF-2 subfamily.

The protein localises to the cytoplasm. Catalyzes the GTP-dependent ribosomal translocation step during translation elongation. During this step, the ribosome changes from the pre-translocational (PRE) to the post-translocational (POST) state as the newly formed A-site-bound peptidyl-tRNA and P-site-bound deacylated tRNA move to the P and E sites, respectively. Catalyzes the coordinated movement of the two tRNA molecules, the mRNA and conformational changes in the ribosome. This Desulforudis audaxviator (strain MP104C) protein is Elongation factor G.